Here is a 379-residue protein sequence, read N- to C-terminus: Protein RecA (379 aa).

Residues 1 to 24 (MSVDVKSAQSSKSDSLQAEPRPGE) are disordered. The segment covering 7–16 (SAQSSKSDSL) has biased composition (polar residues). Position 84–91 (84–91 (GPESSGKT)) interacts with ATP.

Belongs to the RecA family.

The protein localises to the cytoplasm. In terms of biological role, can catalyze the hydrolysis of ATP in the presence of single-stranded DNA, the ATP-dependent uptake of single-stranded DNA by duplex DNA, and the ATP-dependent hybridization of homologous single-stranded DNAs. It interacts with LexA causing its activation and leading to its autocatalytic cleavage. This is Protein RecA from Prochlorococcus marinus (strain MIT 9303).